Consider the following 503-residue polypeptide: Glutamate/gamma-aminobutyrate antiporter (503 aa).

33–43 is an L-glutamate binding site; sequence LHLVFFLLLGG. Helical transmembrane passes span 35-55, 153-173, 194-214, 232-252, 366-386, 407-427, and 440-460; these read LVFF…LCAA, FVVG…AYFI, VSTL…EASA, ILLV…VAAV, LTVV…FVLI, IIAG…FVPP, and MILL…YELH.

This sequence belongs to the amino acid-polyamine-organocation (APC) superfamily. Glutamate:GABA antiporter (GGA) (TC 2.A.3.7) family.

It is found in the cell membrane. It catalyses the reaction 4-aminobutanoate(in) + L-glutamate(out) = 4-aminobutanoate(out) + L-glutamate(in). Involved in glutaminase-dependent acid resistance. Exchanges extracellular glutamate (Glu) for intracellular gamma-aminobutyric acid (GABA) under acidic conditions. This is Glutamate/gamma-aminobutyrate antiporter from Lactococcus lactis subsp. cremoris (strain MG1363).